We begin with the raw amino-acid sequence, 314 residues long: 4-hydroxy-3-methylbut-2-enyl diphosphate reductase (314 aa).

Cys12 contacts [4Fe-4S] cluster. Residues His41 and His74 each contribute to the (2E)-4-hydroxy-3-methylbut-2-enyl diphosphate site. The dimethylallyl diphosphate site is built by His41 and His74. His41 and His74 together coordinate isopentenyl diphosphate. Cys96 contacts [4Fe-4S] cluster. His124 contributes to the (2E)-4-hydroxy-3-methylbut-2-enyl diphosphate binding site. His124 contributes to the dimethylallyl diphosphate binding site. His124 contributes to the isopentenyl diphosphate binding site. Catalysis depends on Glu126, which acts as the Proton donor. Residue Thr167 participates in (2E)-4-hydroxy-3-methylbut-2-enyl diphosphate binding. Cys197 is a [4Fe-4S] cluster binding site. Positions 225, 226, 227, and 269 each coordinate (2E)-4-hydroxy-3-methylbut-2-enyl diphosphate. The dimethylallyl diphosphate site is built by Ser225, Ser226, Asn227, and Ser269. The isopentenyl diphosphate site is built by Ser225, Ser226, Asn227, and Ser269.

The protein belongs to the IspH family. Requires [4Fe-4S] cluster as cofactor.

It carries out the reaction isopentenyl diphosphate + 2 oxidized [2Fe-2S]-[ferredoxin] + H2O = (2E)-4-hydroxy-3-methylbut-2-enyl diphosphate + 2 reduced [2Fe-2S]-[ferredoxin] + 2 H(+). The enzyme catalyses dimethylallyl diphosphate + 2 oxidized [2Fe-2S]-[ferredoxin] + H2O = (2E)-4-hydroxy-3-methylbut-2-enyl diphosphate + 2 reduced [2Fe-2S]-[ferredoxin] + 2 H(+). It participates in isoprenoid biosynthesis; dimethylallyl diphosphate biosynthesis; dimethylallyl diphosphate from (2E)-4-hydroxy-3-methylbutenyl diphosphate: step 1/1. The protein operates within isoprenoid biosynthesis; isopentenyl diphosphate biosynthesis via DXP pathway; isopentenyl diphosphate from 1-deoxy-D-xylulose 5-phosphate: step 6/6. Functionally, catalyzes the conversion of 1-hydroxy-2-methyl-2-(E)-butenyl 4-diphosphate (HMBPP) into a mixture of isopentenyl diphosphate (IPP) and dimethylallyl diphosphate (DMAPP). Acts in the terminal step of the DOXP/MEP pathway for isoprenoid precursor biosynthesis. The chain is 4-hydroxy-3-methylbut-2-enyl diphosphate reductase from Haemophilus influenzae (strain 86-028NP).